Here is a 190-residue protein sequence, read N- to C-terminus: RING finger protein 227 (190 aa).

The RING-type zinc finger occupies Cys-18–Arg-81. The tract at residues Lys-111–Ser-145 is disordered. The segment covering Asp-126–Glu-136 has biased composition (acidic residues).

The polypeptide is RING finger protein 227 (Homo sapiens (Human)).